Here is an 810-residue protein sequence, read N- to C-terminus: Lon protease (810 aa).

A Lon N-terminal domain is found at 32-226 (LPAIAMRSNM…RILDILARET (195 aa)). An ATP-binding site is contributed by 376-383 (GPPGVGKT). The region spanning 612-791 (KPMIGVTTGL…EEVLEVALNE (180 aa)) is the Lon proteolytic domain. Residues S697 and K740 contribute to the active site.

It belongs to the peptidase S16 family. In terms of assembly, homohexamer. Organized in a ring with a central cavity.

Its subcellular location is the cytoplasm. It carries out the reaction Hydrolysis of proteins in presence of ATP.. Its function is as follows. ATP-dependent serine protease that mediates the selective degradation of mutant and abnormal proteins as well as certain short-lived regulatory proteins. Required for cellular homeostasis and for survival from DNA damage and developmental changes induced by stress. Degrades polypeptides processively to yield small peptide fragments that are 5 to 10 amino acids long. Binds to DNA in a double-stranded, site-specific manner. In Fervidobacterium nodosum (strain ATCC 35602 / DSM 5306 / Rt17-B1), this protein is Lon protease.